The sequence spans 332 residues: MEVHGSGFRRILLLALCISGIWSAYIYQGVLQETLSTKRFGPDEKRFEHLAFLNLAQSVVCLIWSYIMIKLWSNAGNGGAPWWTYWSAGITNTIGPAMGIEALKYISYPAQVLAKSSKMIPVMLMGTLVYGIRYTFPEYMCTFLVAGGVSIFALLKTSSKTISKLAHPNAPLGYALCSLNLAFDGFTNATQDSIASRYPKTEAWDIMLGMNLWGTIYNMIYMFGLPQGIGFKAIQFCKLHPEAAWDILKYCICGAVGQNFIFMTISNFGSLANTTITTTRKFVSIVVSSVMSGNPLSLKQWGCVSMVFGGLAYQIYLKWKKLQRVEKKKQKS.

8 consecutive transmembrane segments (helical) span residues 11-31 (ILLL…QGVL), 49-69 (HLAF…YIMI), 80-100 (APWW…AMGI), 112-132 (VLAK…VYGI), 135-155 (TFPE…FALL), 206-226 (IMLG…FGLP), 252-272 (ICGA…GSLA), and 301-317 (WGCV…QIYL). The short motif at 327 to 332 (KKKQKS) is the Di-lysine motif element.

It belongs to the nucleotide-sugar transporter family. UDP-galactose:UMP antiporter (TC 2.A.7.11) subfamily.

The protein resides in the endoplasmic reticulum membrane. Essential sugar transporter required for the transport of UDP-galactose and UDP-glucose from the cytoplasm into the Golgi and the endoplasmic reticulum, to ensure quality control of protein folding. Essential for pollen development and involved in embryo sac progress. This Arabidopsis thaliana (Mouse-ear cress) protein is UDP-galactose/UDP-glucose transporter 1.